The sequence spans 471 residues: Rho GTPase-activating protein 15 (471 aa).

The interval 1 to 20 is disordered; it reads MQKSTNSDIPVETLNPTRQG. At S43 the chain carries Phosphoserine. The region spanning 79 to 189 is the PH domain; that stretch reads MVEKEGYLQK…WFHAIKNAID (111 aa). 3 positions are modified to phosphoserine: S196, S199, and S243. Residues 281–470 form the Rho-GAP domain; sequence SHLHTLCERE…LMLSAYDQIF (190 aa).

Its subcellular location is the cytoplasm. It is found in the membrane. Functionally, GTPase activator for the Rho-type GTPases by converting them to an inactive GDP-bound state. Has activity toward RAC1. Overexpression results in an increase in actin stress fibers and cell contraction. In Bos taurus (Bovine), this protein is Rho GTPase-activating protein 15 (ARHGAP15).